A 454-amino-acid chain; its full sequence is MIKILRNINNNIVNRYDGLNKSYLNINFYCSTTNNSSGKIDYTKLIPENGNISKSITEKIGKNLHCKRDHPLNIIKKKIQYHFQNKLSDEEHKFQFFDSFEPKVSVKENFDELLFPVDHVGRSPNDTYYFSKDQLLRTHTSAHQSQLLREQEKAFLVTGDVYRRDTIDAVHYPVFHQMEGVKVFKDKVNLAIDGKPFDETIDYYEDNNYKQLQSVKDVEKDLKQSLESMIRSVIGQDLQVRWIDAYFPFTSPSFEMEIYFQGQWLEVLGCGVVHPSIMNNCGLSNDRAWAFGIGLERLAMILFNIPDIRLFWTEDNRFHNQFKGVDKSISTSSSSSSSSSSSSSSTLSDIDIKGVQFQQFSKYPSCFKDVSFWLEDEENFHENKFYEFVRESCGDLVERVDLVDNFTNKKLNKTSHCYRIYYRSMDRNLTNEEIDILQFNLREKLENHLSVKLR.

Substrate-binding positions include 141–144 (SAHQ), Arg163, 170–172 (VHY), 177–179 (QME), Glu266, and Phe291. Positions 327-347 (KSISTSSSSSSSSSSSSSSTL) are disordered. A compositionally biased stretch (low complexity) spans 328–347 (SISTSSSSSSSSSSSSSSTL). The 94-residue stretch at 361–454 (SKYPSCFKDV…LENHLSVKLR (94 aa)) folds into the FDX-ACB domain.

This sequence belongs to the class-II aminoacyl-tRNA synthetase family. Monomer.

It localises to the mitochondrion matrix. The enzyme catalyses tRNA(Phe) + L-phenylalanine + ATP = L-phenylalanyl-tRNA(Phe) + AMP + diphosphate + H(+). In terms of biological role, is responsible for the charging of tRNA(Phe) with phenylalanine in mitochondrial translation. The chain is Phenylalanine--tRNA ligase, mitochondrial (mpheS) from Dictyostelium discoideum (Social amoeba).